A 194-amino-acid polypeptide reads, in one-letter code: ATP-dependent Clp protease proteolytic subunit (194 aa).

S97 acts as the Nucleophile in catalysis. H122 is an active-site residue.

It belongs to the peptidase S14 family. As to quaternary structure, fourteen ClpP subunits assemble into 2 heptameric rings which stack back to back to give a disk-like structure with a central cavity, resembling the structure of eukaryotic proteasomes.

It localises to the cytoplasm. It carries out the reaction Hydrolysis of proteins to small peptides in the presence of ATP and magnesium. alpha-casein is the usual test substrate. In the absence of ATP, only oligopeptides shorter than five residues are hydrolyzed (such as succinyl-Leu-Tyr-|-NHMec, and Leu-Tyr-Leu-|-Tyr-Trp, in which cleavage of the -Tyr-|-Leu- and -Tyr-|-Trp bonds also occurs).. Its function is as follows. Cleaves peptides in various proteins in a process that requires ATP hydrolysis. Has a chymotrypsin-like activity. Plays a major role in the degradation of misfolded proteins. This chain is ATP-dependent Clp protease proteolytic subunit, found in Campylobacter jejuni subsp. jejuni serotype O:23/36 (strain 81-176).